The sequence spans 230 residues: UPF0173 metal-dependent hydrolase TM1040_1920 (230 aa).

This sequence belongs to the UPF0173 family.

This chain is UPF0173 metal-dependent hydrolase TM1040_1920, found in Ruegeria sp. (strain TM1040) (Silicibacter sp.).